The sequence spans 170 residues: Prenyl-diphosphate phosphatase (170 aa).

The 131-residue stretch at 25–155 (HIHRASQLIL…PGNYTPALRE (131 aa)) folds into the Nudix hydrolase domain. The Nudix box motif lies at 59 to 83 (YSVSGTVADESYEACIAREMLEEIG). Positions 77 and 81 each coordinate Mg(2+).

It belongs to the Nudix hydrolase family. Requires Mg(2+) as cofactor.

It carries out the reaction dimethylallyl diphosphate + H2O = dimethylallyl phosphate + phosphate + H(+). The enzyme catalyses isopentenyl diphosphate + H2O = isopentenyl phosphate + phosphate + H(+). It catalyses the reaction (2E,6E)-farnesyl diphosphate + H2O = (2E,6E)-farnesyl phosphate + phosphate + H(+). The catalysed reaction is (2E)-geranyl diphosphate + H2O = (2E)-geranyl phosphate + phosphate + H(+). Its pathway is isoprenoid biosynthesis. In terms of biological role, hydrolyzes homoallylic isopentenyl diphosphate (IPP), its allylic isomer dimethylallyl diphosphate (DMAPP) and short-chain prenyl diphosphates geranyl diphosphate (GPP) and farnesyl diphosphate (FPP) to their corresponding monophosphate forms with high activity. The preferred substrate is IPP. ADP, NADPH, Ap5A and thiamine diphosphate (TPP) are weakly hydrolyzed. No hydrolysis with ATP, dNTPs, 8-OH-dGTP, NAD+, FAD or acetyl-CoA. The likely physiological role of this enzyme is to provide a substrate dimethylallyl phosphate (DMAP) for prenylated flavin mononucleotide (prenyl-FMN) synthase MM_1871 involved in the biosynthesis of prenyl-FMN, a coenzyme required in the archaea-specific mevalonate pathway. In Methanosarcina mazei (strain ATCC BAA-159 / DSM 3647 / Goe1 / Go1 / JCM 11833 / OCM 88) (Methanosarcina frisia), this protein is Prenyl-diphosphate phosphatase.